The sequence spans 350 residues: Protein-glutamate methylesterase/protein-glutamine glutaminase 1 (350 aa).

The Response regulatory domain maps to 6–123; it reads RVLVVDDSAL…GRSVENYAEE (118 aa). Aspartate 57 bears the 4-aspartylphosphate mark. The CheB-type methylesterase domain maps to 159–350; the sequence is LGASGKIIFV…ARRVLGAVSA (192 aa). Residues serine 171, histidine 197, and aspartate 293 contribute to the active site.

It belongs to the CheB family. Phosphorylated by CheA. Phosphorylation of the N-terminal regulatory domain activates the methylesterase activity.

It is found in the cytoplasm. It catalyses the reaction [protein]-L-glutamate 5-O-methyl ester + H2O = L-glutamyl-[protein] + methanol + H(+). It carries out the reaction L-glutaminyl-[protein] + H2O = L-glutamyl-[protein] + NH4(+). Functionally, involved in chemotaxis. Part of a chemotaxis signal transduction system that modulates chemotaxis in response to various stimuli. Catalyzes the demethylation of specific methylglutamate residues introduced into the chemoreceptors (methyl-accepting chemotaxis proteins or MCP) by CheR. Also mediates the irreversible deamidation of specific glutamine residues to glutamic acid. In Dechloromonas aromatica (strain RCB), this protein is Protein-glutamate methylesterase/protein-glutamine glutaminase 1.